Here is a 488-residue protein sequence, read N- to C-terminus: MNSLYIAGEWLAGQGEAFQSLNPVTQQVLWSGEGATAAQVESAVQAARQAFPGWARRTLEDRISVLEAFAAALKNHADELARTIGEETGKPLWEAATEVTSMVNKIAISVQSYRERTGEKSGPLGDATAVLRHKPHGVVAVFGPYNFPGHLPNGHIVPALLAGNSVLFKPSELTPKVAELTVKCWIEAGLPAGVLNLLQGARETGIALAANPGIDGLFFTGSSRTGNHLHQQFAGRPDKILALEMGGNNPLVVDQVADIDAAVYTIIQSAFISAGQRCTCARRLLVPEGAWGDSLLKRLVEVSSTIEVGAFDQQPAPFMGSVVSLGAAKALMDAQAHLLANGAVSLLAMTQPQAQSALLTPGIVDVTAVADRSDEELFGPLLQVIRYADFAAAIAEANDTAFGLAAGLLSDSEERYQQFWLESRAGIVNWNKQLTGAASSAPFGGVGASGNHRASAYYAADYCAYPVASLETPSLVLPAALTPGVKMA.

221-226 (GSSRTG) contacts NAD(+). Active-site residues include glutamate 244 and cysteine 278.

This sequence belongs to the aldehyde dehydrogenase family. AstD subfamily.

It carries out the reaction N-succinyl-L-glutamate 5-semialdehyde + NAD(+) + H2O = N-succinyl-L-glutamate + NADH + 2 H(+). It participates in amino-acid degradation; L-arginine degradation via AST pathway; L-glutamate and succinate from L-arginine: step 4/5. Its function is as follows. Catalyzes the NAD-dependent reduction of succinylglutamate semialdehyde into succinylglutamate. This is N-succinylglutamate 5-semialdehyde dehydrogenase from Pseudomonas fluorescens (strain Pf0-1).